A 566-amino-acid polypeptide reads, in one-letter code: Putative lipase ATG15 (566 aa).

Residues 1-17 (MGSKHKKNASKSLRAFS) are Cytoplasmic-facing. A helical; Signal-anchor for type II membrane protein transmembrane segment spans residues 18–38 (FIILSASIALVYIFNPVKLIF). Topologically, residues 39 to 566 (PSSIIRFHHG…CVEWGDEEDA (528 aa)) are lumenal. N-linked (GlcNAc...) asparagine glycans are attached at residues Asn-264 and Asn-348. Catalysis depends on Ser-366, which acts as the Charge relay system. Residue Asn-483 is glycosylated (N-linked (GlcNAc...) asparagine). Positions 507 to 545 (DSLDDEPPLPNPLRPGKPSTTSSSQHHTSTTTTTETSRP) are disordered. Residues 522 to 543 (GKPSTTSSSQHHTSTTTTTETS) show a composition bias toward low complexity.

It belongs to the AB hydrolase superfamily. Lipase family. Binds to both phosphatidylinositol (PI) and phosphatidylinositol 3,5-bisphosphate (PIP2).

Its subcellular location is the endosome. The protein resides in the multivesicular body membrane. It localises to the prevacuolar compartment membrane. The catalysed reaction is a triacylglycerol + H2O = a diacylglycerol + a fatty acid + H(+). Functionally, lipase which is essential for lysis of subvacuolar cytoplasm to vacuole targeted bodies and intravacuolar autophagic bodies. Involved in the lysis of intravacuolar multivesicular body (MVB) vesicles. The intravacuolar membrane disintegration by ATG15 is critical to life span extension. This is Putative lipase ATG15 (ATG15) from Meyerozyma guilliermondii (strain ATCC 6260 / CBS 566 / DSM 6381 / JCM 1539 / NBRC 10279 / NRRL Y-324) (Yeast).